We begin with the raw amino-acid sequence, 296 residues long: GTPase Era (296 aa).

The 168-residue stretch at 7–174 folds into the Era-type G domain; sequence RAGFVAIVGR…LDEIAAGLPQ (168 aa). The tract at residues 15-22 is G1; that stretch reads GRPNVGKS. 15 to 22 provides a ligand contact to GTP; the sequence is GRPNVGKS. Positions 41–45 are G2; that stretch reads QTTRH. The G3 stretch occupies residues 62–65; sequence DTPG. Residues 62–66 and 123–126 contribute to the GTP site; these read DTPGF and SKID. The G4 stretch occupies residues 123-126; it reads SKID. Residues 153-155 form a G5 region; the sequence is VSA. In terms of domain architecture, KH type-2 spans 205 to 281; sequence VGDELPYGCT…HLEIYIKVRK (77 aa).

The protein belongs to the TRAFAC class TrmE-Era-EngA-EngB-Septin-like GTPase superfamily. Era GTPase family. Monomer.

It localises to the cytoplasm. It is found in the cell inner membrane. Its function is as follows. An essential GTPase that binds both GDP and GTP, with rapid nucleotide exchange. Plays a role in 16S rRNA processing and 30S ribosomal subunit biogenesis and possibly also in cell cycle regulation and energy metabolism. The chain is GTPase Era from Bordetella parapertussis (strain 12822 / ATCC BAA-587 / NCTC 13253).